We begin with the raw amino-acid sequence, 343 residues long: Protein RecA (343 aa).

65–72 contacts ATP; sequence GPESSGKT.

This sequence belongs to the RecA family.

The protein resides in the cytoplasm. Its function is as follows. Can catalyze the hydrolysis of ATP in the presence of single-stranded DNA, the ATP-dependent uptake of single-stranded DNA by duplex DNA, and the ATP-dependent hybridization of homologous single-stranded DNAs. It interacts with LexA causing its activation and leading to its autocatalytic cleavage. The sequence is that of Protein RecA from Campylobacter jejuni subsp. jejuni serotype O:6 (strain 81116 / NCTC 11828).